The sequence spans 107 residues: Large ribosomal subunit protein uL18c (107 aa).

The protein belongs to the universal ribosomal protein uL18 family. In terms of assembly, part of the 50S ribosomal subunit; contacts the 5S rRNA.

It is found in the plastid. It localises to the chloroplast. In terms of biological role, binds 5S rRNA, forms part of the central protuberance of the 50S subunit. The chain is Large ribosomal subunit protein uL18c (rpl18) from Guillardia theta (Cryptophyte).